We begin with the raw amino-acid sequence, 832 residues long: Mechanosensitive cation channel TMEM63B (832 aa).

Residues 1 to 40 lie on the Extracellular side of the membrane; it reads MLPFLLATLGTAALNSSNPKDYCYSARIRSTVLQGLPFGG. A helical transmembrane segment spans residues 41-65; that stretch reads VPTVLALDFMCFLALLFLFSILRKV. Cysteine 51 carries the S-palmitoyl cysteine lipid modification. Over 66 to 145 the chain is Cytoplasmic; that stretch reads AWDYGRLALV…KDDEIRDKCG (80 aa). The Mediates endoplasmic reticulum retention signature appears at 86 to 88; that stretch reads RER. Serine 111, serine 113, serine 114, and serine 115 each carry phosphoserine. Residue cysteine 126 is the site of S-palmitoyl cysteine attachment. The helical transmembrane segment at 146–178 threads the bilayer; the sequence is GDAVHYLSFQRHIIGLLVVVGVLSVGIVLPVNF. The Extracellular segment spans residues 179-202; it reads SGDLLENNAYSFGRTTIANLKSGN. The chain crosses the membrane as a helical span at residues 203 to 227; sequence NLLWLHTSFAFLYLLLTVYSMRRHT. The Cytoplasmic segment spans residues 228–427; the sequence is SKMRYKEDDL…IYWEHLSIRG (200 aa). Positions 231 to 426 are intracellular linker IL2; confers mechanosensitivity; that stretch reads RYKEDDLVKR…NIYWEHLSIR (196 aa). Residues cysteine 382 and cysteine 398 are each lipidated (S-palmitoyl cysteine). The helical transmembrane segment at 428–457 threads the bilayer; it reads FIWWLRCLVINVVLFILLFFLTTPAIIITT. Residues 458 to 472 lie on the Extracellular side of the membrane; it reads MDKFNVTKPVEYLNN. The N-linked (GlcNAc...) asparagine glycan is linked to asparagine 462. The helical transmembrane segment at 473–502 threads the bilayer; that stretch reads PIITQFFPTLLLWCFSALLPTIVYYSAFFE. The Cytoplasmic portion of the chain corresponds to 503–506; the sequence is AHWT. A helical membrane pass occupies residues 507–543; it reads RSGENRTTMHKCYTFLIFMVLLLPSLGLSSLDLFFRW. At 544-566 the chain is on the extracellular side; it reads LFDKKFLAEAAIRFECVFLPDNG. The chain crosses the membrane as a helical span at residues 567 to 599; sequence AFFVNYVIASAFIGNAMDLLRIPGLLMYMIRLC. The segment at 567 to 599 is gating helix; that stretch reads AFFVNYVIASAFIGNAMDLLRIPGLLMYMIRLC. At 600–619 the chain is on the cytoplasmic side; sequence LARSAAERRNVKRHQAYEFQ. Residues 620–638 form a helical membrane-spanning segment; that stretch reads FGAAYAWMMCVFTVVMTYS. Over 639-641 the chain is Extracellular; it reads ITC. A helical membrane pass occupies residues 642–666; the sequence is PIIVPFGLMYMLLKHLVDRYNLYYA. At 667-673 the chain is on the cytoplasmic side; the sequence is YLPAKLD. Residues 674 to 702 form a helical membrane-spanning segment; that stretch reads KKIHSGAVNQVVAAPILCLFWLLFFSTMR. At 703 to 707 the chain is on the extracellular side; sequence TGFLA. A helical membrane pass occupies residues 708 to 728; it reads PTSMFTFVVLVITIVICLCHV. Residues cysteine 726 and cysteine 729 are each lipidated (S-palmitoyl cysteine). The Cytoplasmic portion of the chain corresponds to 729–832; the sequence is CFGHFKYLSA…DSLIENEIHQ (104 aa). 2 disordered regions span residues 748–767 and 776–818; these read TDAVSSRSNGRPPTAGAVPK and LQDS…DTDF. The segment covering 749–758 has biased composition (polar residues); the sequence is DAVSSRSNGR. A compositionally biased stretch (low complexity) spans 789–801; the sequence is PGSSGDEPPSSSS.

It belongs to the CSC1 (TC 1.A.17) family. Monomer. Interacts with SLC19A2; interaction is required for the phospholipid scramblase activity. In terms of processing, palmitoylation is required for localization to the plasma membrane and stability. In terms of tissue distribution, expressed in cochlear hair cells (at protein level). Highly expressed in the subfornical organ of the brain. Expressed in small intestine. As to expression, brain-specific.

The protein resides in the cell membrane. It localises to the endoplasmic reticulum membrane. Its subcellular location is the lysosome membrane. It is found in the early endosome membrane. The enzyme catalyses Ca(2+)(in) = Ca(2+)(out). It carries out the reaction Mg(2+)(in) = Mg(2+)(out). The catalysed reaction is K(+)(in) = K(+)(out). It catalyses the reaction Na(+)(in) = Na(+)(out). The enzyme catalyses Cs(+)(in) = Cs(+)(out). It carries out the reaction a 1,2-diacyl-sn-glycero-3-phosphocholine(in) = a 1,2-diacyl-sn-glycero-3-phosphocholine(out). The catalysed reaction is a sphingomyelin(in) = a sphingomyelin(out). Functionally, mechanosensitive cation channel with low conductance and high activation threshold. Osmosensitive cation channel preferentially activated by hypotonic stress. Also acts as a phospholipid scramblase in response to changes in membrane structure: upon changes in membrane curvature and thickness, alters its conformation and translocates phospholipids, such as phosphatidylcholine and sphingomyelin, thereby controlling plasma membrane lipid distribution. Forms a heterodimer with SLC19A2, which mediates phospholipid scramblase activity following Ca(2+) stimulation. Expressed in excitatory neurons of the subfornical organ and functions as a thirst receptor that mediates neuronal response to hyperosmolality to drive thirst and drinking behavior. Facilitates intestinal motility by promoting proliferation of intestinal stem cells. Essential for the baby's first breath and respiration throughout life. Upon lung inflation conducts cation currents in alveolar type 1 and 2 cells triggering lamellar body exocytosis and surfactant secretion into airspace. Acts as an osmosensor in cochlear outer hair cells (OHCs) where it mediates calcium influx and regulatory volume decrease response. Required for the maintenance of OHC morphology, OHC survival and normal hearing. Brain-specific osmosensitive calcium channel isoform. This Mus musculus (Mouse) protein is Mechanosensitive cation channel TMEM63B.